The following is a 326-amino-acid chain: Pectate lyase plyB (326 aa).

An N-terminal signal peptide occupies residues 1 to 15; sequence MRFTPLFLLAAVAIA. Residues aspartate 133, aspartate 162, and aspartate 166 each contribute to the Ca(2+) site. Arginine 219 is a catalytic residue.

The protein belongs to the polysaccharide lyase 1 family. It depends on Ca(2+) as a cofactor.

It is found in the secreted. It catalyses the reaction Eliminative cleavage of (1-&gt;4)-alpha-D-galacturonan to give oligosaccharides with 4-deoxy-alpha-D-galact-4-enuronosyl groups at their non-reducing ends.. It functions in the pathway glycan metabolism; pectin degradation; 2-dehydro-3-deoxy-D-gluconate from pectin: step 2/5. Functionally, pectinolytic enzyme consist of four classes of enzymes: pectin lyase, polygalacturonase, pectin methylesterase and rhamnogalacturonase. Among pectinolytic enzymes, pectin lyase is the most important in depolymerization of pectin, since it cleaves internal glycosidic bonds of highly methylated pectins. In Emericella nidulans (strain FGSC A4 / ATCC 38163 / CBS 112.46 / NRRL 194 / M139) (Aspergillus nidulans), this protein is Pectate lyase plyB (plyB).